The chain runs to 207 residues: NADH-quinone oxidoreductase chain 5 (207 aa).

This sequence belongs to the complex I 30 kDa subunit family. As to quaternary structure, NDH-1 is composed of at least 14 different subunits, Nqo1 to Nqo14. The complex has a L-shaped structure, with the hydrophobic arm (subunits Nqo7, Nqo8, Nqo10 to Nqo14) embedded in the inner membrane and the hydrophilic peripheral arm (subunits Nqo1 to Nqo6, Nqo9) protruding into the bacterial cytoplasm. The hydrophilic domain contains all the redox centers.

It is found in the cell inner membrane. It catalyses the reaction a quinone + NADH + 5 H(+)(in) = a quinol + NAD(+) + 4 H(+)(out). In terms of biological role, NDH-1 shuttles electrons from NADH, via FMN and iron-sulfur (Fe-S) centers, to quinones in the respiratory chain. The immediate electron acceptor for the enzyme in this species is believed to be ubiquinone. Couples the redox reaction to proton translocation (for every two electrons transferred, four hydrogen ions are translocated across the cytoplasmic membrane), and thus conserves the redox energy in a proton gradient. The chain is NADH-quinone oxidoreductase chain 5 (nqo5) from Paracoccus denitrificans.